Consider the following 478-residue polypeptide: Lactate utilization protein B (478 aa).

2 4Fe-4S ferredoxin-type domains span residues 303 to 333 and 352 to 381; these read GTEFQSALHCIRCAACINVCPVYRHVGGHAY and YDDHKELPYASSLCAACTEACPVKIPLHEQ. Positions 312, 315, 318, 322, 365, 368, and 372 each coordinate [4Fe-4S] cluster.

This sequence belongs to the LutB/YkgF family.

Is involved in L-lactate degradation and allows cells to grow with lactate as the sole carbon source. Has probably a role as an electron transporter during oxidation of L-lactate. The polypeptide is Lactate utilization protein B (Oceanobacillus iheyensis (strain DSM 14371 / CIP 107618 / JCM 11309 / KCTC 3954 / HTE831)).